A 368-amino-acid chain; its full sequence is Dihydroorotate dehydrogenase (quinone) (368 aa).

FMN-binding positions include 67–71 (AGFDK) and T91. K71 is a substrate binding site. 116–120 (NRMGF) is a substrate binding site. Residues N146 and N179 each coordinate FMN. A substrate-binding site is contributed by N179. Catalysis depends on S182, which acts as the Nucleophile. Residue N184 coordinates substrate. Positions 222 and 250 each coordinate FMN. 251-252 (NT) contacts substrate. Residues G276, G305, and 326–327 (YS) each bind FMN.

The protein belongs to the dihydroorotate dehydrogenase family. Type 2 subfamily. In terms of assembly, monomer. FMN serves as cofactor.

It localises to the cell membrane. It carries out the reaction (S)-dihydroorotate + a quinone = orotate + a quinol. Its pathway is pyrimidine metabolism; UMP biosynthesis via de novo pathway; orotate from (S)-dihydroorotate (quinone route): step 1/1. Its function is as follows. Catalyzes the conversion of dihydroorotate to orotate with quinone as electron acceptor. The chain is Dihydroorotate dehydrogenase (quinone) from Streptomyces avermitilis (strain ATCC 31267 / DSM 46492 / JCM 5070 / NBRC 14893 / NCIMB 12804 / NRRL 8165 / MA-4680).